Here is a 299-residue protein sequence, read N- to C-terminus: CDP-abequose synthase (299 aa).

T117 is a binding site for substrate. The active-site Proton acceptor is the Y134.

This sequence belongs to the NAD(P)-dependent epimerase/dehydratase family.

It catalyses the reaction CDP-alpha-D-abequose + NADP(+) = CDP-4-dehydro-3,6-dideoxy-alpha-D-glucose + NADPH + H(+). It participates in bacterial outer membrane biogenesis; LPS O-antigen biosynthesis. The polypeptide is CDP-abequose synthase (rfbJ) (Salmonella typhimurium (strain LT2 / SGSC1412 / ATCC 700720)).